Reading from the N-terminus, the 266-residue chain is Dihydropteroate synthase (266 aa).

In terms of domain architecture, Pterin-binding spans 12 to 260 (AAIMGILNVT…DVKANQDIVA (249 aa)). A Mg(2+)-binding site is contributed by Asn-19. (7,8-dihydropterin-6-yl)methyl diphosphate contacts are provided by residues Thr-59, Asp-93, Asn-112, Asp-176, Lys-212, and 248 to 250 (RVH).

This sequence belongs to the DHPS family. As to quaternary structure, homodimer or homotrimer. The cofactor is Mg(2+).

The enzyme catalyses (7,8-dihydropterin-6-yl)methyl diphosphate + 4-aminobenzoate = 7,8-dihydropteroate + diphosphate. Its pathway is cofactor biosynthesis; tetrahydrofolate biosynthesis; 7,8-dihydrofolate from 2-amino-4-hydroxy-6-hydroxymethyl-7,8-dihydropteridine diphosphate and 4-aminobenzoate: step 1/2. Catalyzes the condensation of para-aminobenzoate (pABA) with 6-hydroxymethyl-7,8-dihydropterin diphosphate (DHPt-PP) to form 7,8-dihydropteroate (H2Pte), the immediate precursor of folate derivatives. This is Dihydropteroate synthase (folP) from Streptococcus pyogenes serotype M1.